A 549-amino-acid chain; its full sequence is MVFKKIKTQIDHALKQLNLPTDVEYLIQQTKNIQFGDFSSNVAMVLSKRQNKNPQEIAKQIIEQLNPNEFEKITFSKPGFINFFLSNQDKLVVLKRLQETNYSVEKLPKEEQESINIEFVSANPTGFLHLGHVRNAYTGDVLSNILRAVGHNVTKEYWINDLGNQVSLFALSTIIRYLQELGINKYELPDDSYHGKEPIFVAEEMIKDFGNKYQDIKIEDNKIVDSKIANELTQYCTNKMLHFIKQDLESIGVKMDVWTSEKVVYQSNTLTELLNNQLKDHIYEQDGAVWLRTTDGGDDKDRVIIKENKQPTYYGTDIANHYLKHKRGFDRLINVWGADHFGHILRTAYAAELTGIKKGKFVVVLIEMVKLLKDNKEIKFSKRLGNAISIPDMLEFLSKDASRWFMLNQSWTSGIRIDVDLTNKKDSSNPVYYVQYAHARIHKLLTKAEHIDLNKVNLSLLNSDVERTMVNYLASFEHYVHNVATTYEVNKLLNFVYTLTQSFHSWYNSHEILNQKDEIKQTRLLLAKAIKNLINYLLSLFGIEAVEQM.

The short motif at 122-132 is the 'HIGH' region element; that stretch reads ANPTGFLHLGH.

It belongs to the class-I aminoacyl-tRNA synthetase family. In terms of assembly, monomer.

It is found in the cytoplasm. The catalysed reaction is tRNA(Arg) + L-arginine + ATP = L-arginyl-tRNA(Arg) + AMP + diphosphate. The polypeptide is Arginine--tRNA ligase (Mycoplasmoides gallisepticum (strain R(low / passage 15 / clone 2)) (Mycoplasma gallisepticum)).